A 238-amino-acid chain; its full sequence is Ribonuclease PH (238 aa).

Phosphate is bound by residues R86 and 124 to 126 (GTR).

This sequence belongs to the RNase PH family. As to quaternary structure, homohexameric ring arranged as a trimer of dimers.

It carries out the reaction tRNA(n+1) + phosphate = tRNA(n) + a ribonucleoside 5'-diphosphate. Functionally, phosphorolytic 3'-5' exoribonuclease that plays an important role in tRNA 3'-end maturation. Removes nucleotide residues following the 3'-CCA terminus of tRNAs; can also add nucleotides to the ends of RNA molecules by using nucleoside diphosphates as substrates, but this may not be physiologically important. Probably plays a role in initiation of 16S rRNA degradation (leading to ribosome degradation) during starvation. This chain is Ribonuclease PH, found in Parvibaculum lavamentivorans (strain DS-1 / DSM 13023 / NCIMB 13966).